We begin with the raw amino-acid sequence, 423 residues long: MKAELIAVGTEILTGQIVNTNAQFLSEKMAELGIDVYFQTAVGDNEERLLSVITTASQRSDLVILCGGLGPTKDDLTKQTLAKYLRKDLVYDEQACQKLDDFFAKRKPSSRTPNNERQAQVIEGSIPLPNKTGLAVGGFITVDGISYVVLPGPPSELKPMVNEELVPLLSKQYSTLYSKVLRFFGIGESQLVTVLSDFIENQTDPTIAPYAKTGEVTLRLSTKTENQALADKKLGQLEAQLLSRKTLEGQPLADVFYGYGEDNSLARETFELLVKYDKTITAAESLTAGLFQSTLASFPGASQVFNGGFVTYSMEEKAKMLGLPLEELKSHGVVSAYTAEGMAEQARLLTGADIGVSLTGVAGPDMLEEQPAGTVFIGLATQNKVESIKVLISGRSRLDVRYIATLHAFNMVRKTLLKLENLL.

Belongs to the CinA family.

The sequence is that of Putative competence-damage inducible protein from Streptococcus pyogenes serotype M2 (strain MGAS10270).